The following is a 204-amino-acid chain: Ribosome maturation factor RimP (204 aa).

The protein belongs to the RimP family.

The protein localises to the cytoplasm. Its function is as follows. Required for maturation of 30S ribosomal subunits. The protein is Ribosome maturation factor RimP of Albidiferax ferrireducens (strain ATCC BAA-621 / DSM 15236 / T118) (Rhodoferax ferrireducens).